The chain runs to 390 residues: 1-deoxy-D-xylulose 5-phosphate reductoisomerase (390 aa).

Residues Thr10, Gly11, Ser12, Ile13, Gly36, Arg37, Asn38, and Asn121 each coordinate NADPH. Lys122 contributes to the 1-deoxy-D-xylulose 5-phosphate binding site. Glu123 serves as a coordination point for NADPH. A Mn(2+)-binding site is contributed by Asp147. Residues Ser148, Glu149, Ser173, and His196 each coordinate 1-deoxy-D-xylulose 5-phosphate. Glu149 is a Mn(2+) binding site. Gly202 provides a ligand contact to NADPH. Residues Ser209, Asn214, Lys215, and Glu218 each coordinate 1-deoxy-D-xylulose 5-phosphate. Residue Glu218 participates in Mn(2+) binding. Residues 367 to 390 (AASEHGRREAEKRVGARAHAPASR) are disordered. Over residues 370–380 (EHGRREAEKRV) the composition is skewed to basic and acidic residues.

The protein belongs to the DXR family. It depends on Mg(2+) as a cofactor. Mn(2+) serves as cofactor.

The enzyme catalyses 2-C-methyl-D-erythritol 4-phosphate + NADP(+) = 1-deoxy-D-xylulose 5-phosphate + NADPH + H(+). It participates in isoprenoid biosynthesis; isopentenyl diphosphate biosynthesis via DXP pathway; isopentenyl diphosphate from 1-deoxy-D-xylulose 5-phosphate: step 1/6. In terms of biological role, catalyzes the NADPH-dependent rearrangement and reduction of 1-deoxy-D-xylulose-5-phosphate (DXP) to 2-C-methyl-D-erythritol 4-phosphate (MEP). The protein is 1-deoxy-D-xylulose 5-phosphate reductoisomerase of Anaeromyxobacter dehalogenans (strain 2CP-1 / ATCC BAA-258).